Consider the following 239-residue polypeptide: tRNA (guanine-N(7)-)-methyltransferase (239 aa).

Polar residues predominate over residues 1–13; the sequence is MEAEVQQGQQSPE. Residues 1–30 are disordered; the sequence is MEAEVQQGQQSPEGQLEKRPPSPPWAGIPL. 4 residues coordinate S-adenosyl-L-methionine: aspartate 72, glutamate 97, asparagine 124, and aspartate 147. Aspartate 147 is a catalytic residue. The substrate site is built by lysine 151 and aspartate 183.

This sequence belongs to the class I-like SAM-binding methyltransferase superfamily. TrmB family.

It catalyses the reaction guanosine(46) in tRNA + S-adenosyl-L-methionine = N(7)-methylguanosine(46) in tRNA + S-adenosyl-L-homocysteine. It functions in the pathway tRNA modification; N(7)-methylguanine-tRNA biosynthesis. In terms of biological role, catalyzes the formation of N(7)-methylguanine at position 46 (m7G46) in tRNA. The chain is tRNA (guanine-N(7)-)-methyltransferase from Synechococcus sp. (strain JA-2-3B'a(2-13)) (Cyanobacteria bacterium Yellowstone B-Prime).